Reading from the N-terminus, the 500-residue chain is Probable cytosol aminopeptidase (500 aa).

The Mn(2+) site is built by Lys-264 and Asp-269. Lys-276 is an active-site residue. 3 residues coordinate Mn(2+): Asp-287, Asp-346, and Glu-348. Residue Arg-350 is part of the active site.

This sequence belongs to the peptidase M17 family. The cofactor is Mn(2+).

It localises to the cytoplasm. The enzyme catalyses Release of an N-terminal amino acid, Xaa-|-Yaa-, in which Xaa is preferably Leu, but may be other amino acids including Pro although not Arg or Lys, and Yaa may be Pro. Amino acid amides and methyl esters are also readily hydrolyzed, but rates on arylamides are exceedingly low.. It carries out the reaction Release of an N-terminal amino acid, preferentially leucine, but not glutamic or aspartic acids.. Presumably involved in the processing and regular turnover of intracellular proteins. Catalyzes the removal of unsubstituted N-terminal amino acids from various peptides. The chain is Probable cytosol aminopeptidase from Rhodopseudomonas palustris (strain TIE-1).